We begin with the raw amino-acid sequence, 738 residues long: NAD(P)H-quinone oxidoreductase subunit 5, chloroplastic (738 aa).

A run of 17 helical transmembrane segments spans residues 9–29 (WVIPLLPLPVIMSMGFGLFLI), 39–59 (IWAFPSILLLSIAMVFSLHLS), 89–109 (VDPLTSIMLILITTVGILVLI), 125–145 (FVYISFFNTSMLGLVTSSNLI), 147–167 (IYFFWELVGMCSYLLIGFWFT), 185–205 (GDFGLLLGILGFFWITGSLEF), 219–239 (NGINSLLTTLCAFLLFLGAVA), 258–278 (TPISALIHAATMVAAGIFLLA), 280–300 (LLPLFISLPWIMSFISLIGTI), 327–347 (LGYMMLALGIGSYQAALFHLI), 354–374 (ALLFLGSGSVIHSMEPLVGYS), 396–416 (TTFLCGTLSLCGIPPLACFWS), 425–445 (WLYSPFFGIIASFTAGLTAFY), 542–562 (LFPLLILLLFTLFIGSIGIHF), 610–630 (SLAIFGLFIAYIFYGSAYSFF), 691–711 (GVIDGITNGVGLAGFCIGEEI), and 717–737 (GRISSYLFFFLCYVSLFLFFI).

It belongs to the complex I subunit 5 family. As to quaternary structure, NDH is composed of at least 16 different subunits, 5 of which are encoded in the nucleus.

Its subcellular location is the plastid. The protein resides in the chloroplast thylakoid membrane. The enzyme catalyses a plastoquinone + NADH + (n+1) H(+)(in) = a plastoquinol + NAD(+) + n H(+)(out). The catalysed reaction is a plastoquinone + NADPH + (n+1) H(+)(in) = a plastoquinol + NADP(+) + n H(+)(out). NDH shuttles electrons from NAD(P)H:plastoquinone, via FMN and iron-sulfur (Fe-S) centers, to quinones in the photosynthetic chain and possibly in a chloroplast respiratory chain. The immediate electron acceptor for the enzyme in this species is believed to be plastoquinone. Couples the redox reaction to proton translocation, and thus conserves the redox energy in a proton gradient. In Zea mays (Maize), this protein is NAD(P)H-quinone oxidoreductase subunit 5, chloroplastic (ndhF).